A 319-amino-acid polypeptide reads, in one-letter code: Acetyl-coenzyme A carboxylase carboxyl transferase subunit alpha (319 aa).

In terms of domain architecture, CoA carboxyltransferase C-terminal spans Arg39 to Glu293.

Belongs to the AccA family. As to quaternary structure, acetyl-CoA carboxylase is a heterohexamer composed of biotin carboxyl carrier protein (AccB), biotin carboxylase (AccC) and two subunits each of ACCase subunit alpha (AccA) and ACCase subunit beta (AccD).

It is found in the cytoplasm. The catalysed reaction is N(6)-carboxybiotinyl-L-lysyl-[protein] + acetyl-CoA = N(6)-biotinyl-L-lysyl-[protein] + malonyl-CoA. It participates in lipid metabolism; malonyl-CoA biosynthesis; malonyl-CoA from acetyl-CoA: step 1/1. Functionally, component of the acetyl coenzyme A carboxylase (ACC) complex. First, biotin carboxylase catalyzes the carboxylation of biotin on its carrier protein (BCCP) and then the CO(2) group is transferred by the carboxyltransferase to acetyl-CoA to form malonyl-CoA. The chain is Acetyl-coenzyme A carboxylase carboxyl transferase subunit alpha from Neisseria meningitidis serogroup B (strain ATCC BAA-335 / MC58).